The primary structure comprises 187 residues: Nicotinamide-nucleotide adenylyltransferase (187 aa).

Belongs to the archaeal NMN adenylyltransferase family.

It localises to the cytoplasm. The catalysed reaction is beta-nicotinamide D-ribonucleotide + ATP + H(+) = diphosphate + NAD(+). The protein operates within cofactor biosynthesis; NAD(+) biosynthesis; NAD(+) from nicotinamide D-ribonucleotide: step 1/1. The chain is Nicotinamide-nucleotide adenylyltransferase from Thermococcus onnurineus (strain NA1).